The following is a 433-amino-acid chain: Glutamate-1-semialdehyde 2,1-aminomutase (433 aa).

Lys-265 is subject to N6-(pyridoxal phosphate)lysine.

This sequence belongs to the class-III pyridoxal-phosphate-dependent aminotransferase family. HemL subfamily. As to quaternary structure, homodimer. Requires pyridoxal 5'-phosphate as cofactor.

Its subcellular location is the cytoplasm. It catalyses the reaction (S)-4-amino-5-oxopentanoate = 5-aminolevulinate. It functions in the pathway porphyrin-containing compound metabolism; protoporphyrin-IX biosynthesis; 5-aminolevulinate from L-glutamyl-tRNA(Glu): step 2/2. The sequence is that of Glutamate-1-semialdehyde 2,1-aminomutase from Shewanella denitrificans (strain OS217 / ATCC BAA-1090 / DSM 15013).